Here is a 462-residue protein sequence, read N- to C-terminus: NEDD8-activating enzyme E1 regulatory subunit (462 aa).

This sequence belongs to the ubiquitin-activating E1 family. ULA1 subfamily. Heterodimer of UBA3 and ULA1. The complex binds NEDD8 and UBC12.

It participates in protein modification; protein neddylation. Regulatory subunit of the dimeric UBA3-ULA1 E1 enzyme. E1 activates NEDD8/RUB1 by first adenylating its C-terminal glycine residue with ATP, thereafter linking this residue to the side chain of the catalytic cysteine, yielding a NEDD8-UBA3 thioester and free AMP. E1 finally transfers NEDD8 to the catalytic cysteine of UBC12. The sequence is that of NEDD8-activating enzyme E1 regulatory subunit (ULA1) from Saccharomyces cerevisiae (strain ATCC 204508 / S288c) (Baker's yeast).